A 933-amino-acid polypeptide reads, in one-letter code: Progesterone receptor (933 aa).

The segment at 1-48 (MTELKAKGPRAPHVAGGPPSPEVGSPLLCRPAAGPFEGSQTSDTLPEV) is disordered. An AF3; mediates transcriptional activation region spans residues 1-164 (MTELKAKGPR…PATQRVLSPL (164 aa)). The modulating, Pro-Rich stretch occupies residues 1 to 566 (MTELKAKGPR…YSFESLPQKI (566 aa)). Residue serine 20 is modified to Phosphoserine. The LXXL motif 1 motif lies at 55 to 59 (LDGLL). The segment at 66–255 (GQDLPDEKTQ…GAAAGGGAAA (190 aa)) is disordered. Phosphoserine is present on serine 81. The LXXL motif 2 motif lies at 115–119 (LDTLL). Serine 130 and serine 162 each carry phosphoserine. The mediates transcriptional transrepression stretch occupies residues 165–305 (MSRSGGKTGD…LATTMMDFIH (141 aa)). The Nuclear localization signal signature appears at 183 to 187 (KVLPR). Residues serine 190 and serine 213 each carry the phosphoserine modification. Serine 294 carries the post-translational modification Phosphoserine; by MAPK1. Residues 331-378 (GGAGAASAFAPPQSSPSASSTPVAVGDFPDCAYPPDAEPKDNAYPLYG) form a disordered region. Residues 335–350 (AASAFAPPQSSPSASS) show a composition bias toward low complexity. The residue at position 345 (serine 345) is a Phosphoserine; by MAPK. Lysine 388 participates in a covalent cross-link: Glycyl lysine isopeptide (Lys-Gly) (interchain with G-Cter in SUMO); alternate. Lysine 388 participates in a covalent cross-link: Glycyl lysine isopeptide (Lys-Gly) (interchain with G-Cter in ubiquitin); alternate. At serine 400 the chain carries Phosphoserine; by CDK2. A disordered region spans residues 415–454 (PDYPLGPPPQLPPRAPPSRPGEAAVTAAPASASVSSASSP). A compositionally biased stretch (pro residues) spans 418 to 433 (PLGPPPQLPPRAPPSR). Positions 437-454 (AAVTAAPASASVSSASSP) are enriched in low complexity. Residues 456 to 546 (STLECILYKA…VYPPYLNYLR (91 aa)) form an AF1; mediates transcriptional activation region. Lysine 531 is covalently cross-linked (Glycyl lysine isopeptide (Lys-Gly) (interchain with G-Cter in SUMO)). 2 consecutive NR C4-type zinc fingers follow at residues 567–587 (CLIC…CGSC) and 603–627 (CAGR…LRKC). A DNA-binding region (nuclear receptor) is located at residues 567–639 (CLICGDEASG…AGMVLGGRKF (73 aa)). Serine 676 carries the post-translational modification Phosphoserine. Residues 679–913 (QDIQLIPPLI…EFPEMMSEVI (235 aa)) enclose the NR LBD domain. The tract at residues 687–933 (LIKLLMSIEP…MVKPLLFHKK (247 aa)) is AF2; mediates transcriptional activation.

The protein belongs to the nuclear hormone receptor family. As to quaternary structure, interacts with SMARD1 and UNC45A. Interacts with CUEDC2; the interaction promotes ubiquitination, decreases sumoylation, and represses transcriptional activity. Interacts with PIAS3; the interaction promotes sumoylation of PR in a hormone-dependent manner, inhibits DNA-binding, and alters nuclear export. Interacts with SP1; the interaction requires ligand-induced phosphorylation on Ser-345 by ERK1/2-MAPK. Interacts with PRMT2. Interacts with NCOA2 and NCOA1. Interacts with KLF9. Interacts with GTF2B. In terms of processing, phosphorylated on multiple serine sites. Several of these sites are hormone-dependent. Phosphorylation on Ser-294 is highly hormone-dependent and modulates ubiquitination and sumoylation on Lys-388. Phosphorylation on Ser-345 also requires induction by hormone. Basal phosphorylation on Ser-81, Ser-162, Ser-190 and Ser-400 is increased in response to progesterone and can be phosphorylated in vitro by the CDK2-A1 complex. Increased levels of phosphorylation on Ser-400 also in the presence of EGF, heregulin, IGF, PMA and FBS. Phosphorylation at this site by CDK2 is ligand-independent, and increases nuclear translocation and transcriptional activity. Phosphorylation at Ser-162 and Ser-294, but not at Ser-190, is impaired during the G(2)/M phase of the cell cycle. Phosphorylation on Ser-345 by ERK1/2 MAPK is required for interaction with SP1. Post-translationally, sumoylation is hormone-dependent and represses transcriptional activity. Sumoylation on all three sites is enhanced by PIAS3. Desumoylated by SENP1. Sumoylation on Lys-388, the main site of sumoylation, is repressed by ubiquitination on the same site, and modulated by phosphorylation at Ser-294. Ubiquitination is hormone-dependent and represses sumoylation on the same site. Promoted by MAPK-mediated phosphorylation on Ser-294. In terms of processing, palmitoylated by ZDHHC7 and ZDHHC21. Palmitoylation is required for plasma membrane targeting and for rapid intracellular signaling via ERK and AKT kinases and cAMP generation.

The protein localises to the nucleus. It is found in the cytoplasm. Its function is as follows. The steroid hormones and their receptors are involved in the regulation of eukaryotic gene expression and affect cellular proliferation and differentiation in target tissues. Transcriptional activator of several progesteron-dependent promoters in a variety of cell types. Involved in activation of SRC-dependent MAPK signaling on hormone stimulation. This chain is Progesterone receptor (PGR), found in Trachypithecus obscurus (Dusky leaf-monkey).